The chain runs to 828 residues: Periplasmic nitrate reductase (828 aa).

Positions 1-31 (MKLSRRSFMKANAVAAAAAAAGLSVPGVARA) form a signal peptide, tat-type signal. The 4Fe-4S Mo/W bis-MGD-type domain occupies 39-95 (IKWDKAPCRFCGTGCGVLVGTQQGRVVACQGDPDAPVNRGLNCIKGYFLPKIMYGKD). The [4Fe-4S] cluster site is built by Cys46, Cys49, Cys53, and Cys81. Mo-bis(molybdopterin guanine dinucleotide) is bound by residues Lys83, Gln150, Asn175, Cys179, 212-219 (WGSNMAEM), 243-247 (STFQH), 262-264 (QSD), Met372, Gln376, Asn482, 508-509 (SD), Lys531, Asp558, and 718-727 (TGRVLEHWHT). Phe794 contacts substrate. Residues Asn802 and Lys819 each contribute to the Mo-bis(molybdopterin guanine dinucleotide) site.

It belongs to the prokaryotic molybdopterin-containing oxidoreductase family. NasA/NapA/NarB subfamily. As to quaternary structure, component of the periplasmic nitrate reductase NapAB complex composed of NapA and NapB. [4Fe-4S] cluster is required as a cofactor. Requires Mo-bis(molybdopterin guanine dinucleotide) as cofactor. Predicted to be exported by the Tat system. The position of the signal peptide cleavage has not been experimentally proven.

It localises to the periplasm. It carries out the reaction 2 Fe(II)-[cytochrome] + nitrate + 2 H(+) = 2 Fe(III)-[cytochrome] + nitrite + H2O. Its function is as follows. Catalytic subunit of the periplasmic nitrate reductase complex NapAB. Receives electrons from NapB and catalyzes the reduction of nitrate to nitrite. The protein is Periplasmic nitrate reductase of Salmonella arizonae (strain ATCC BAA-731 / CDC346-86 / RSK2980).